Consider the following 233-residue polypeptide: Type IV secretion system protein PtlE homolog (233 aa).

Residues 42 to 62 form a helical membrane-spanning segment; the sequence is VAWAALAVTALSLIAIATMLP.

Belongs to the virB8 family.

Its subcellular location is the cell inner membrane. The protein is Type IV secretion system protein PtlE homolog (ptlE) of Bordetella bronchiseptica (strain ATCC BAA-588 / NCTC 13252 / RB50) (Alcaligenes bronchisepticus).